Here is a 497-residue protein sequence, read N- to C-terminus: Cysteine desulfurase, mitochondrial (497 aa).

Residues 1–33 (MLKSTATRSITRLSQVYNVPAATYRACLVSRRF) constitute a mitochondrion transit peptide. Residues 168-169 (AT), Asn-248, Gln-276, and 296-298 (SSH) each bind pyridoxal 5'-phosphate. An N6-(pyridoxal phosphate)lysine modification is found at Lys-299. Pyridoxal 5'-phosphate is bound at residue Thr-336. The active-site Cysteine persulfide intermediate is the Cys-421. Cys-421 is a binding site for [2Fe-2S] cluster.

Belongs to the class-V pyridoxal-phosphate-dependent aminotransferase family. NifS/IscS subfamily. The cofactor is pyridoxal 5'-phosphate.

It is found in the mitochondrion. The enzyme catalyses (sulfur carrier)-H + L-cysteine = (sulfur carrier)-SH + L-alanine. Catalyzes the removal of elemental sulfur from cysteine to produce alanine. It supplies the inorganic sulfur for iron-sulfur (Fe-S) clusters. Plays a role in both tRNA-processing and mitochondrial metabolism. Involved in the 2-thio-modification of both 5-carboxymethylaminomethyl-2-thiouridine in mitochondrial tRNAs and 5-methoxycarbonylmethyl-2-thiouridine (mcm5s2U) in cytoplasmic tRNAs. This Saccharomyces cerevisiae (strain ATCC 204508 / S288c) (Baker's yeast) protein is Cysteine desulfurase, mitochondrial.